The chain runs to 516 residues: Protein BTN1 (516 aa).

8 helical membrane-spanning segments follow: residues 24 to 44 (LFAA…IILS), 57 to 77 (GVVA…WPLL), 88 to 108 (VGFC…SSSL), 112 to 132 (LLGI…FLQL), 146 to 166 (LGAW…IWWL), 169 to 189 (GLGV…FPIT), 371 to 391 (PAII…TFFF), and 409 to 429 (SITI…SGYV).

The protein belongs to the battenin family.

The protein localises to the vacuole membrane. Involved in vacuolar transport and vacuole pH homeostasis. Also required for cytokinesis. The sequence is that of Protein BTN1 (BTN1) from Cryptococcus neoformans var. neoformans serotype D (strain JEC21 / ATCC MYA-565) (Filobasidiella neoformans).